The sequence spans 867 residues: Cilium assembly protein DZIP1 (867 aa).

A mediates interaction with PCM1 region spans residues M12 to C203. A mediates interaction with GLI3 and localization to the cilium basal body region spans residues M12 to L367. The segment at C154 to K278 is required for interaction with DAZ1. Residues Y198–H221 form a C2H2-type zinc finger. Phosphoserine; by PLK1 is present on S226. 3 coiled-coil regions span residues Y230–I340, T401–N445, and D568–I588. The segment at P446–C617 is mediates interaction with GDI2 and RAB8A. Composition is skewed to polar residues over residues L643–T654, K671–F680, and N708–K718. 2 disordered regions span residues L643–N768 and S796–V867. Over residues D722–D733 the composition is skewed to acidic residues. Residues S807–F823 are compositionally biased toward basic and acidic residues. The segment covering S848–T859 has biased composition (low complexity).

Belongs to the DZIP C2H2-type zinc-finger protein family. As to quaternary structure, interacts with DAZ1. Interacts with the BBSome; recruits the BBSome to centriolar satellites of the cilium. Interacts with PCM1; localizes DZIP1 and the associated BBSome to centriolar satellites. Interacts with RAB8A (GDP-bound inactive form); recruits RAB8A to the basal body of the cilium and prevents its inhibition by GDI2. Interacts with GDI2; negatively regulates the interaction of GDI2 with GDP-bound RAB8A. Interacts with GLI3; retains GLI3 within the cytoplasm. Interacts with CEP164. Interacts with IFT88. Phosphorylation at Ser-226 by PLK1 before mitosis prevents interaction with PCM1 and localization to centriolar satellites. Thereby, it negatively regulates the localization of the BBSome to centriolar satellites. As to expression, predominantly expressed in testis (at protein level). Also expressed in fetal brain, adult oocytes and ovary. Expressed in undifferentiated ES cells. In testis, it is specifically expressed in germ cells (at protein level). Expressed in mature germ cells and secondary spermatocytes, while it is weakly or not expressed in primary spermatocytes.

The protein localises to the cytoplasm. It localises to the cytoskeleton. It is found in the cilium basal body. The protein resides in the microtubule organizing center. Its subcellular location is the centrosome. The protein localises to the centriolar satellite. It localises to the centriole. It is found in the nucleus. The protein resides in the nucleus speckle. Its function is as follows. Molecular adapter that recruits protein complexes required for cilium assembly and function to the cilium basal body. At the exit of mitosis, localizes to the basal body and ciliary base of the forming primary cilium where it recruits and activates RAB8A to direct vesicle-mediated transport of proteins to the cilium. Also recruits the BBSome, a complex involved in cilium biogenesis, by bridging it to PCM1 at the centriolar satellites of the cilium. It is also required for the recruitment to the cilium basal body of the intraflagellar transport (IFT) machinery as well as the ciliary appendage proteins CEP164 and NINEIN. Functions as a regulator of Hedgehog signaling both through its role in cilium assembly but also probably through its ability to retain GLI3 within the cytoplasm. It is involved in spermatogenesis through its role in organization of the basal body and assembly of the sperm flagellum. Also indirectly involved in heart development through its function in ciliogenesis. This is Cilium assembly protein DZIP1 from Homo sapiens (Human).